Consider the following 415-residue polypeptide: Tyrosine--tRNA ligase (415 aa).

Residue Tyr-34 participates in L-tyrosine binding. The short motif at 39–48 is the 'HIGH' region element; the sequence is PTSDSLTVGH. L-tyrosine is bound by residues Tyr-164 and Gln-168. A 'KMSKS' region motif is present at residues 225–229; sequence KFGKS. Lys-228 provides a ligand contact to ATP. The 67-residue stretch at 348 to 414 folds into the S4 RNA-binding domain; sequence IPLSEALVKT…GKKNNSLIIL (67 aa).

The protein belongs to the class-I aminoacyl-tRNA synthetase family. TyrS type 1 subfamily. In terms of assembly, homodimer.

Its subcellular location is the cytoplasm. It catalyses the reaction tRNA(Tyr) + L-tyrosine + ATP = L-tyrosyl-tRNA(Tyr) + AMP + diphosphate + H(+). Its function is as follows. Catalyzes the attachment of tyrosine to tRNA(Tyr) in a two-step reaction: tyrosine is first activated by ATP to form Tyr-AMP and then transferred to the acceptor end of tRNA(Tyr). The polypeptide is Tyrosine--tRNA ligase (Phytoplasma australiense).